We begin with the raw amino-acid sequence, 272 residues long: HTH-type transcriptional repressor AllR (272 aa).

The tract at residues 1-20 is disordered; it reads MTEVRRRGRPGQQEPSAQKG. Residues 21–83 form the HTH iclR-type domain; the sequence is AQALERGIAI…SQLGWWHIGL (63 aa). Positions 43-62 form a DNA-binding region, H-T-H motif; the sequence is VSDISLNLDLPLSTTFRLLK. Residues 98–267 enclose the IclR-ED domain; that stretch reads VLSVGGPFMR…ARNISTALGL (170 aa). Glyoxylate is bound by residues 154–156, D207, C217, and 234–236; these read SGA and SIS.

Its function is as follows. Negative regulator of allantoin and glyoxylate utilization operons. Binds to the gcl promoter and to the allS-allA intergenic region. The sequence is that of HTH-type transcriptional repressor AllR (allR) from Klebsiella pneumoniae.